Reading from the N-terminus, the 589-residue chain is Multidrug transporter FLR2 (589 aa).

The disordered stretch occupies residues 50–116; the sequence is KEEMKQDNQT…SSTKDASKPE (67 aa). The span at 56 to 73 shows a compositional bias: low complexity; the sequence is DNQTSTDSMSTSTQQETD. Asn-57 carries an N-linked (GlcNAc...) asparagine glycan. The span at 107-116 shows a compositional bias: basic and acidic residues; the sequence is SSTKDASKPE. Asn-136 is a glycosylation site (N-linked (GlcNAc...) asparagine). Helical transmembrane passes span 143–163, 179–199, 211–231, 234–254, 275–295, 301–321, 378–398, 417–437, 455–475, 480–500, 516–536, and 551–571; these read TFVIVQLMVLTCINYMGSSIY, VVGTLNLSMYVLGYAIGPIIF, MPLYLWTFILFTILQVACALV, IAGLVILRFITGILCSPVLAT, WAVGAVAAPVMAPILGAAMVV, WIFWLMLFMCGATLLSIIFFF, PIILAFDVYIALCYGAFYLFF, GLAFLGFCVGCVFAYTALIIF, LFLILAMCLGWCLPFSLFFFG, IHWILPIIAELFFVLSVFNLF, ASVFAGNGLCRGAFAAAFPLF, and VAWGSTLIGFITVVLSLIPFV.

Belongs to the major facilitator superfamily.

It localises to the cell membrane. Functionally, multidrug transporter that confers resistance to 5-flucytosine (5-FC) and clotrimazole. Further confers azole drug resistance. Plays direct roles in extrusion of 5-flucytosine and clotrimazole. The sequence is that of Multidrug transporter FLR2 from Candida glabrata (strain ATCC 2001 / BCRC 20586 / JCM 3761 / NBRC 0622 / NRRL Y-65 / CBS 138) (Yeast).